Here is a 426-residue protein sequence, read N- to C-terminus: Enolase (426 aa).

Residue Q163 participates in (2R)-2-phosphoglycerate binding. E205 functions as the Proton donor in the catalytic mechanism. Residues D242, E283, and D310 each contribute to the Mg(2+) site. 4 residues coordinate (2R)-2-phosphoglycerate: K335, R364, S365, and K386. K335 serves as the catalytic Proton acceptor.

This sequence belongs to the enolase family. Requires Mg(2+) as cofactor.

The protein resides in the cytoplasm. It localises to the secreted. Its subcellular location is the cell surface. It carries out the reaction (2R)-2-phosphoglycerate = phosphoenolpyruvate + H2O. It functions in the pathway carbohydrate degradation; glycolysis; pyruvate from D-glyceraldehyde 3-phosphate: step 4/5. Its function is as follows. Catalyzes the reversible conversion of 2-phosphoglycerate (2-PG) into phosphoenolpyruvate (PEP). It is essential for the degradation of carbohydrates via glycolysis. The polypeptide is Enolase (Cutibacterium acnes (strain DSM 16379 / KPA171202) (Propionibacterium acnes)).